The sequence spans 233 residues: Purine nucleoside phosphorylase DeoD-type (233 aa).

His-4 provides a ligand contact to a purine D-ribonucleoside. Phosphate is bound by residues Gly-20, Arg-24, Arg-43, and 87 to 90 (RIGT). A purine D-ribonucleoside is bound by residues 179-181 (EME) and 203-204 (SD). The active-site Proton donor is Asp-204.

The protein belongs to the PNP/UDP phosphorylase family. In terms of assembly, homohexamer; trimer of homodimers.

It carries out the reaction a purine D-ribonucleoside + phosphate = a purine nucleobase + alpha-D-ribose 1-phosphate. It catalyses the reaction a purine 2'-deoxy-D-ribonucleoside + phosphate = a purine nucleobase + 2-deoxy-alpha-D-ribose 1-phosphate. Its function is as follows. Catalyzes the reversible phosphorolytic breakdown of the N-glycosidic bond in the beta-(deoxy)ribonucleoside molecules, with the formation of the corresponding free purine bases and pentose-1-phosphate. The chain is Purine nucleoside phosphorylase DeoD-type from Thermoanaerobacter pseudethanolicus (strain ATCC 33223 / 39E) (Clostridium thermohydrosulfuricum).